The chain runs to 528 residues: Apolipoprotein N-acyltransferase (528 aa).

5 consecutive transmembrane segments (helical) span residues 8 to 28 (IMLL…AVGA), 69 to 89 (AFWI…WWLG), 99 to 119 (FAWA…VFYG), 178 to 198 (VLGL…PALL), and 203 to 223 (GAKL…GYGA). The CN hydrolase domain maps to 241 to 490 (VQPNIDQAAK…EGVENATFTL (250 aa)). Glu285 (proton acceptor) is an active-site residue. The active site involves Lys349. Cys402 (nucleophile) is an active-site residue.

Belongs to the CN hydrolase family. Apolipoprotein N-acyltransferase subfamily.

Its subcellular location is the cell inner membrane. It carries out the reaction N-terminal S-1,2-diacyl-sn-glyceryl-L-cysteinyl-[lipoprotein] + a glycerophospholipid = N-acyl-S-1,2-diacyl-sn-glyceryl-L-cysteinyl-[lipoprotein] + a 2-acyl-sn-glycero-3-phospholipid + H(+). The protein operates within protein modification; lipoprotein biosynthesis (N-acyl transfer). Its function is as follows. Catalyzes the phospholipid dependent N-acylation of the N-terminal cysteine of apolipoprotein, the last step in lipoprotein maturation. The sequence is that of Apolipoprotein N-acyltransferase from Allorhizobium ampelinum (strain ATCC BAA-846 / DSM 112012 / S4) (Agrobacterium vitis (strain S4)).